The following is a 381-amino-acid chain: Galactose-1-phosphate uridylyltransferase (381 aa).

Residues cysteine 65 and cysteine 68 each coordinate Zn(2+). 90-91 (ND) provides a ligand contact to UDP-alpha-D-glucose. Histidine 131 lines the Zn(2+) pocket. Asparagine 175 is a UDP-alpha-D-glucose binding site. Histidine 186 contributes to the Zn(2+) binding site. Histidine 188 acts as the Tele-UMP-histidine intermediate in catalysis. Glutamine 190 contributes to the UDP-alpha-D-glucose binding site. Positions 204, 306, 323, and 325 each coordinate Fe cation. Residues 338–341 (KFMV) and 343–344 (FE) contribute to the UDP-alpha-D-glucose site.

It belongs to the galactose-1-phosphate uridylyltransferase type 1 family. As to quaternary structure, homodimer. Zn(2+) is required as a cofactor.

The enzyme catalyses alpha-D-galactose 1-phosphate + UDP-alpha-D-glucose = alpha-D-glucose 1-phosphate + UDP-alpha-D-galactose. Its pathway is carbohydrate metabolism; galactose metabolism. The chain is Galactose-1-phosphate uridylyltransferase (GAL7) from Cryptococcus neoformans var. neoformans serotype D (strain B-3501A) (Filobasidiella neoformans).